Here is a 162-residue protein sequence, read N- to C-terminus: Phosphopantetheine adenylyltransferase (162 aa).

Ser9 contributes to the substrate binding site. ATP contacts are provided by residues 9–10 (SF) and His17. 3 residues coordinate substrate: Lys41, Thr73, and Arg87. ATP is bound by residues 88–90 (GLR), Glu98, and 122–128 (NQNISSS).

Belongs to the bacterial CoaD family. Homohexamer. It depends on Mg(2+) as a cofactor.

It is found in the cytoplasm. It carries out the reaction (R)-4'-phosphopantetheine + ATP + H(+) = 3'-dephospho-CoA + diphosphate. Its pathway is cofactor biosynthesis; coenzyme A biosynthesis; CoA from (R)-pantothenate: step 4/5. Functionally, reversibly transfers an adenylyl group from ATP to 4'-phosphopantetheine, yielding dephospho-CoA (dPCoA) and pyrophosphate. This Leuconostoc mesenteroides subsp. mesenteroides (strain ATCC 8293 / DSM 20343 / BCRC 11652 / CCM 1803 / JCM 6124 / NCDO 523 / NBRC 100496 / NCIMB 8023 / NCTC 12954 / NRRL B-1118 / 37Y) protein is Phosphopantetheine adenylyltransferase.